The chain runs to 327 residues: WRKY transcription factor WRKY76 (327 aa).

Residues 56-76 (AKIVEAKVTQMSEENRRLTEV) are a coiled coil. The segment at 87–135 (RLGLDGSASPPRPVSPLSGKKRSRESMETANSCDANSNRHQGGDADHAE) is disordered. Positions 106 to 112 (KKRSRES) match the Nuclear localization signal motif. Residues 114–126 (ETANSCDANSNRH) are compositionally biased toward polar residues. A DNA-binding region (WRKY) is located at residues 160 to 226 (DTSLVVKDGY…YEGEHNHPHP (67 aa)).

This sequence belongs to the WRKY group II-a family.

The protein resides in the nucleus. Its function is as follows. Transcription repressor. Interacts specifically with the W box (5'-(T)TGAC[CT]-3'), a frequently occurring elicitor-responsive cis-acting element. Regulates, probably indirectly, the activation of defense-related genes during defense response. Modulates plant innate immunity against X.oryzae pv. oryzae (Xoo). The sequence is that of WRKY transcription factor WRKY76 from Oryza sativa subsp. japonica (Rice).